A 963-amino-acid chain; its full sequence is Ubiquitin carboxyl-terminal hydrolase 11 (963 aa).

Residues 64 to 93 (VTEDREPQHEELPGLDSQWRQIENGESGRE) form a disordered region. The span at 65 to 75 (TEDREPQHEEL) shows a compositional bias: basic and acidic residues. Positions 76–184 (PGLDSQWRQI…GQPPIERKVI (109 aa)) constitute a DUSP domain. K245 bears the N6-acetyllysine mark. In terms of domain architecture, USP spans 309–930 (CGLTNLGNTC…AAYVLFYQRQ (622 aa)). Residue C318 is the Nucleophile of the active site. Disordered stretches follow at residues 644 to 691 (TKPN…SGVT) and 716 to 735 (LFTLQTVNSNGTSDRTTSPE). S648 is subject to Phosphoserine. Acidic residues predominate over residues 649–665 (DDEDDGDEKEDDEEDKD). Over residues 717–731 (FTLQTVNSNGTSDRT) the composition is skewed to polar residues. S733 is subject to Phosphoserine. Residue H888 is the Proton acceptor of the active site. Over residues 938 to 957 (SPAGSSGAPASPACSSPPSS) the composition is skewed to low complexity. Residues 938–963 (SPAGSSGAPASPACSSPPSSEFMDVN) form a disordered region. The residue at position 948 (S948) is a Phosphoserine.

It belongs to the peptidase C19 family. Monomer. Associated component of the Polycomb group (PcG) multiprotein PRC1-like complex. Interacts with RANBP9/RANBPM. Interacts with BRCA2. Interacts with CHUK/IKKA. Interacts with NFKBIA. Interacts with SPRY3, RAE1, MYCBP2/PAM, and KCTD6. In terms of assembly, (Microbial infection) Interacts with papilloma virus protein 16E7.

The protein resides in the nucleus. Its subcellular location is the cytoplasm. It is found in the chromosome. It catalyses the reaction Thiol-dependent hydrolysis of ester, thioester, amide, peptide and isopeptide bonds formed by the C-terminal Gly of ubiquitin (a 76-residue protein attached to proteins as an intracellular targeting signal).. Protease that can remove conjugated ubiquitin from target proteins and polyubiquitin chains. Inhibits the degradation of target proteins by the proteasome. Cleaves preferentially 'Lys-6' and 'Lys-63'-linked ubiquitin chains. Has lower activity with 'Lys-11' and 'Lys-33'-linked ubiquitin chains, and extremely low activity with 'Lys-27', 'Lys-29' and 'Lys-48'-linked ubiquitin chains (in vitro). Plays a role in the regulation of pathways leading to NF-kappa-B activation. Plays a role in the regulation of DNA repair after double-stranded DNA breaks. Acts as a chromatin regulator via its association with the Polycomb group (PcG) multiprotein PRC1-like complex; may act by deubiquitinating components of the PRC1-like complex. Promotes cell proliferation by deubiquitinating phosphorylated E2F1. The sequence is that of Ubiquitin carboxyl-terminal hydrolase 11 (USP11) from Homo sapiens (Human).